The following is a 502-amino-acid chain: Maturase K (502 aa).

The protein belongs to the intron maturase 2 family. MatK subfamily.

It is found in the plastid. The protein localises to the chloroplast. In terms of biological role, usually encoded in the trnK tRNA gene intron. Probably assists in splicing its own and other chloroplast group II introns. In Spiraea cantoniensis (Reeve's meadowsweet), this protein is Maturase K.